The chain runs to 134 residues: TSC22 domain family protein 3 (134 aa).

Positions 1–60 (MNTEMYQTPMEVAVYQLHNFSISFFSSLLGGDVVSVKLDNSASGASVVALDNKIEQAMDL) are AP1-binding. The interval 76 to 97 (LKEQIRELVEKNSQLERENTLL) is leucine-zipper. The disordered stretch occupies residues 101-134 (ASPEQLEKFQSRLSPEEPAPEAPETPEAPGGSAV). Serine 102 carries the post-translational modification Phosphoserine. Threonine 125 carries the post-translational modification Phosphothreonine. The segment covering 125-134 (TPEAPGGSAV) has biased composition (low complexity).

This sequence belongs to the TSC-22/Dip/Bun family. Can form homodimers, however it is likely to function as a monomer. Interacts with NFKB1. Interacts (via N-terminus) with JUN and FOS; these interactions inhibit the binding of active AP1 to its target DNA. Interacts with MYOD1. Interacts with HDAC1; this interaction affects HDAC1 activity on MYOG promoter and thus inhibits MYOD1 transcriptional activity.

Its subcellular location is the cytoplasm. It localises to the nucleus. Its function is as follows. Protects T-cells from IL2 deprivation-induced apoptosis through the inhibition of FOXO3A transcriptional activity that leads to the down-regulation of the pro-apoptotic factor BCL2L11. In macrophages, plays a role in the anti-inflammatory and immunosuppressive effects of glucocorticoids and IL10. In T-cells, inhibits anti-CD3-induced NFKB1 nuclear translocation and thereby NFKB1 DNA-binding activities. In vitro, suppresses AP-1 transcription factor complex DNA-binding activities. The polypeptide is TSC22 domain family protein 3 (Tsc22d3) (Rattus norvegicus (Rat)).